A 216-amino-acid polypeptide reads, in one-letter code: Ribosomal RNA small subunit methyltransferase G (216 aa).

Residues Gly-73, Leu-78, 124–125, and Arg-139 each bind S-adenosyl-L-methionine; that span reads AE.

It belongs to the methyltransferase superfamily. RNA methyltransferase RsmG family.

The protein resides in the cytoplasm. Functionally, specifically methylates the N7 position of guanine in position 518 of 16S rRNA. In Arthrobacter sp. (strain FB24), this protein is Ribosomal RNA small subunit methyltransferase G.